We begin with the raw amino-acid sequence, 124 residues long: U13-hexatoxin-Mg1a (124 aa).

Positions 1–17 are cleaved as a signal peptide; it reads MKLSALVFVASVMLVAA. Positions 18-52 are excised as a propeptide; sequence SPVKDVEEPVETHLAADLKTIEELAKYEEAAVQKR. Disulfide bonds link C54–C72, C65–C78, C69–C116, and C71–C87.

In terms of tissue distribution, expressed by the venom gland.

The protein localises to the secreted. Functionally, no toxicity is observed upon intracranial injection into mice and intrathorax injection into crickets. This chain is U13-hexatoxin-Mg1a, found in Macrothele gigas (Japanese funnel web spider).